A 215-amino-acid chain; its full sequence is HTH-type transcriptional regulator for conjugative element R391 (215 aa).

The HTH cro/C1-type domain occupies 8 to 61; the sequence is LNHALQLTGVTQSELARRIGIKQQSISQICSGKSARSRYTMQIAEALRVNAHWL. Positions 19-38 form a DNA-binding region, H-T-H motif; that stretch reads QSELARRIGIKQQSISQICS.

May control the expression of the integrase and inhibit excision of the mobile element R391, and regulate the expression of other genes as well. This chain is HTH-type transcriptional regulator for conjugative element R391, found in Providencia rettgeri.